A 353-amino-acid polypeptide reads, in one-letter code: Photosystem II protein D1 (353 aa).

At Thr-2 the chain carries N-acetylthreonine. A Phosphothreonine modification is found at Thr-2. The next 3 helical transmembrane spans lie at 29–46 (YIGW…TATS), 118–133 (HFLL…EWEL), and 142–156 (WIAV…AATA). Residue His-118 participates in chlorophyll a binding. Tyr-126 provides a ligand contact to pheophytin a. Asp-170 and Glu-189 together coordinate [CaMn4O5] cluster. Residues 197–218 (FHMLGVAGVFGGSLFSAMHGSL) traverse the membrane as a helical segment. His-198 contributes to the chlorophyll a binding site. Residues His-215 and 264–265 (SF) contribute to the a quinone site. His-215 is a Fe cation binding site. Position 272 (His-272) interacts with Fe cation. The chain crosses the membrane as a helical span at residues 274–288 (FLAAWPVVGIWFTAL). [CaMn4O5] cluster is bound by residues His-332, Glu-333, Asp-342, and Ala-344. Residues 345-353 (AIEAPATNG) constitute a propeptide that is removed on maturation.

Belongs to the reaction center PufL/M/PsbA/D family. As to quaternary structure, PSII is composed of 1 copy each of membrane proteins PsbA, PsbB, PsbC, PsbD, PsbE, PsbF, PsbH, PsbI, PsbJ, PsbK, PsbL, PsbM, PsbT, PsbX, PsbY, PsbZ, Psb30/Ycf12, at least 3 peripheral proteins of the oxygen-evolving complex and a large number of cofactors. It forms dimeric complexes. The D1/D2 heterodimer binds P680, chlorophylls that are the primary electron donor of PSII, and subsequent electron acceptors. It shares a non-heme iron and each subunit binds pheophytin, quinone, additional chlorophylls, carotenoids and lipids. D1 provides most of the ligands for the Mn4-Ca-O5 cluster of the oxygen-evolving complex (OEC). There is also a Cl(-1) ion associated with D1 and D2, which is required for oxygen evolution. The PSII complex binds additional chlorophylls, carotenoids and specific lipids. is required as a cofactor. Post-translationally, tyr-161 forms a radical intermediate that is referred to as redox-active TyrZ, YZ or Y-Z. In terms of processing, C-terminally processed by CTPA; processing is essential to allow assembly of the oxygen-evolving complex and thus photosynthetic growth.

Its subcellular location is the plastid membrane. It catalyses the reaction 2 a plastoquinone + 4 hnu + 2 H2O = 2 a plastoquinol + O2. Its function is as follows. Photosystem II (PSII) is a light-driven water:plastoquinone oxidoreductase that uses light energy to abstract electrons from H(2)O, generating O(2) and a proton gradient subsequently used for ATP formation. It consists of a core antenna complex that captures photons, and an electron transfer chain that converts photonic excitation into a charge separation. The D1/D2 (PsbA/PsbD) reaction center heterodimer binds P680, the primary electron donor of PSII as well as several subsequent electron acceptors. This Cuscuta exaltata (Tall dodder) protein is Photosystem II protein D1.